Here is a 625-residue protein sequence, read N- to C-terminus: DNA-directed RNA polymerase subunit gamma (625 aa).

Zn(2+) is bound by residues Cys71, Cys73, Cys86, and Cys89. Residues Asp467, Asp469, and Asp471 each coordinate Mg(2+).

Belongs to the RNA polymerase beta' chain family. RpoC1 subfamily. As to quaternary structure, in cyanobacteria the RNAP catalytic core is composed of 2 alpha, 1 beta, 1 beta', 1 gamma and 1 omega subunit. When a sigma factor is associated with the core the holoenzyme is formed, which can initiate transcription. Requires Mg(2+) as cofactor. Zn(2+) is required as a cofactor.

The enzyme catalyses RNA(n) + a ribonucleoside 5'-triphosphate = RNA(n+1) + diphosphate. Its function is as follows. DNA-dependent RNA polymerase catalyzes the transcription of DNA into RNA using the four ribonucleoside triphosphates as substrates. The sequence is that of DNA-directed RNA polymerase subunit gamma from Gloeothece citriformis (strain PCC 7424) (Cyanothece sp. (strain PCC 7424)).